Here is a 208-residue protein sequence, read N- to C-terminus: Cytochrome c biogenesis ATP-binding export protein CcmA (208 aa).

Residues 3–206 (LSGKDLTAYR…LEKFLPPQEK (204 aa)) enclose the ABC transporter domain. 35–42 (GPNGIGKS) contacts ATP.

This sequence belongs to the ABC transporter superfamily. CcmA exporter (TC 3.A.1.107) family. In terms of assembly, the complex is composed of two ATP-binding proteins (CcmA) and two transmembrane proteins (CcmB).

Its subcellular location is the cell inner membrane. The enzyme catalyses heme b(in) + ATP + H2O = heme b(out) + ADP + phosphate + H(+). Its function is as follows. Part of the ABC transporter complex CcmAB involved in the biogenesis of c-type cytochromes; once thought to export heme, this seems not to be the case, but its exact role is uncertain. Responsible for energy coupling to the transport system. The sequence is that of Cytochrome c biogenesis ATP-binding export protein CcmA from Bartonella henselae (strain ATCC 49882 / DSM 28221 / CCUG 30454 / Houston 1) (Rochalimaea henselae).